The sequence spans 418 residues: D-inositol 3-phosphate glycosyltransferase (418 aa).

Residue histidine 9 coordinates 1D-myo-inositol 3-phosphate. UDP-N-acetyl-alpha-D-glucosamine is bound by residues 15–16 (QP) and glycine 23. 1D-myo-inositol 3-phosphate-binding positions include 20–25 (DSGGMN), lysine 78, tyrosine 110, threonine 134, and arginine 154. The UDP-N-acetyl-alpha-D-glucosamine site is built by arginine 231, lysine 236, and arginine 294. Residues tyrosine 303, arginine 304, and alanine 306 each contribute to the Mg(2+) site. UDP-N-acetyl-alpha-D-glucosamine-binding residues include glutamate 316 and glutamate 324. Threonine 330 is a binding site for Mg(2+).

It belongs to the glycosyltransferase group 1 family. MshA subfamily. Homodimer.

The catalysed reaction is 1D-myo-inositol 3-phosphate + UDP-N-acetyl-alpha-D-glucosamine = 1D-myo-inositol 2-acetamido-2-deoxy-alpha-D-glucopyranoside 3-phosphate + UDP + H(+). Its function is as follows. Catalyzes the transfer of a N-acetyl-glucosamine moiety to 1D-myo-inositol 3-phosphate to produce 1D-myo-inositol 2-acetamido-2-deoxy-glucopyranoside 3-phosphate in the mycothiol biosynthesis pathway. The chain is D-inositol 3-phosphate glycosyltransferase from Corynebacterium glutamicum (strain R).